Consider the following 355-residue polypeptide: Putative L-lysine 2,3-aminomutase (355 aa).

Residues 93–308 enclose the Radical SAM core domain; it reads VHQYANRVLM…KERLSGLSLP (216 aa). Positions 108, 112, and 115 each coordinate [4Fe-4S] cluster. K320 is subject to N6-(pyridoxal phosphate)lysine.

The protein belongs to the radical SAM superfamily. KamA family. The cofactor is [4Fe-4S] cluster. Pyridoxal 5'-phosphate is required as a cofactor.

In Treponema pallidum (strain Nichols), this protein is Putative L-lysine 2,3-aminomutase.